We begin with the raw amino-acid sequence, 417 residues long: Serine--tRNA ligase (417 aa).

226–228 (TSE) is a binding site for L-serine. Residues 257 to 259 (RRE) and valine 273 contribute to the ATP site. Position 280 (glutamate 280) interacts with L-serine. 344–347 (EVTS) lines the ATP pocket. Threonine 379 contacts L-serine.

This sequence belongs to the class-II aminoacyl-tRNA synthetase family. Type-1 seryl-tRNA synthetase subfamily. In terms of assembly, homodimer. The tRNA molecule binds across the dimer.

The protein resides in the cytoplasm. The enzyme catalyses tRNA(Ser) + L-serine + ATP = L-seryl-tRNA(Ser) + AMP + diphosphate + H(+). It carries out the reaction tRNA(Sec) + L-serine + ATP = L-seryl-tRNA(Sec) + AMP + diphosphate + H(+). It functions in the pathway aminoacyl-tRNA biosynthesis; selenocysteinyl-tRNA(Sec) biosynthesis; L-seryl-tRNA(Sec) from L-serine and tRNA(Sec): step 1/1. Catalyzes the attachment of serine to tRNA(Ser). Is also able to aminoacylate tRNA(Sec) with serine, to form the misacylated tRNA L-seryl-tRNA(Sec), which will be further converted into selenocysteinyl-tRNA(Sec). In Tropheryma whipplei (strain TW08/27) (Whipple's bacillus), this protein is Serine--tRNA ligase.